A 470-amino-acid chain; its full sequence is Nitric oxide synthase, inducible (470 aa).

L-arginine-binding residues include Trp2, Tyr3, and Glu7. Residues Arg11, Trp93, and Phe106 each contribute to the (6R)-L-erythro-5,6,7,8-tetrahydrobiopterin site. Tyr121 contributes to the heme b binding site. The tract at residues 145–165 (FKAVARAALFSSTLMSRVLAN) is calmodulin-binding. One can recognise a Flavodoxin-like domain in the interval 169 to 307 (CTVLYATETG…AFSAWALTAL (139 aa)). 11 residues coordinate FMN: Thr175, Glu176, Thr177, Lys179, Ser180, Ser221, Thr222, Ser258, Cys265, Glu291, and Gln295. Position 380 (Arg380) interacts with NADP(+). His403 lines the FAD pocket. Thr440 contacts NADP(+).

It belongs to the NOS family. As to quaternary structure, homodimer. The cofactor is heme b. It depends on FAD as a cofactor. FMN is required as a cofactor. Requires (6R)-L-erythro-5,6,7,8-tetrahydrobiopterin as cofactor.

The protein resides in the cytoplasm. The protein localises to the cytosol. It carries out the reaction 2 L-arginine + 3 NADPH + 4 O2 + H(+) = 2 L-citrulline + 2 nitric oxide + 3 NADP(+) + 4 H2O. Not stimulated by calcium/calmodulin. Produces nitric oxide (NO) which is a messenger molecule with diverse functions throughout the body. In macrophages, NO mediates tumoricidal and bactericidal actions. Also has nitrosylase activity and mediates cysteine S-nitrosylation of cytoplasmic target proteins such COX2. The sequence is that of Nitric oxide synthase, inducible (nos2) from Oncorhynchus mykiss (Rainbow trout).